Consider the following 376-residue polypeptide: Methionine import ATP-binding protein MetN 1 (376 aa).

The ABC transporter domain maps to 34 to 273 (VRFINLGKTY…PQHEVSKTLL (240 aa)). 70–77 (GRSGAGKS) is an ATP binding site.

The protein belongs to the ABC transporter superfamily. Methionine importer (TC 3.A.1.24) family. As to quaternary structure, the complex is composed of two ATP-binding proteins (MetN), two transmembrane proteins (MetI) and a solute-binding protein (MetQ).

It is found in the cell inner membrane. It carries out the reaction L-methionine(out) + ATP + H2O = L-methionine(in) + ADP + phosphate + H(+). It catalyses the reaction D-methionine(out) + ATP + H2O = D-methionine(in) + ADP + phosphate + H(+). Its function is as follows. Part of the ABC transporter complex MetNIQ involved in methionine import. Responsible for energy coupling to the transport system. In Pseudomonas syringae pv. tomato (strain ATCC BAA-871 / DC3000), this protein is Methionine import ATP-binding protein MetN 1.